The primary structure comprises 174 residues: Co-chaperone protein HscB homolog (174 aa).

The J domain occupies 2–74; that stretch reads NYFELFKFSP…IRRAEHMLSL (73 aa).

Belongs to the HscB family. Interacts with HscA and stimulates its ATPase activity.

Functionally, co-chaperone involved in the maturation of iron-sulfur cluster-containing proteins. Seems to help targeting proteins to be folded toward HscA. The sequence is that of Co-chaperone protein HscB homolog from Shewanella sp. (strain ANA-3).